The primary structure comprises 1958 residues: Probable Rho GTPase-activating protein CG5521 (1958 aa).

3 disordered regions span residues 1–21, 400–424, and 635–804; these read MFTK…QDSK, PPFL…RSQR, and GSVW…GIEG. The segment covering 400–414 has biased composition (pro residues); that stretch reads PPFLLEPNDDPPPPS. Positions 640–656 are enriched in low complexity; the sequence is GSGSNSAANGGSAASAA. Phosphoserine is present on residues serine 718, serine 764, and serine 767. A compositionally biased stretch (basic and acidic residues) spans 758–774; it reads DLRRAMSLDSLARKGDA. Residues 775-785 show a composition bias toward acidic residues; the sequence is EETDSYQEGDN. Serine 787, serine 791, serine 793, and serine 795 each carry phosphoserine. The span at 788–800 shows a compositional bias: polar residues; the sequence is GAGSRSPSPTASS. Residue tyrosine 980 is modified to Phosphotyrosine. The tract at residues 1534–1568 is disordered; it reads HSTQAPSPALRHASSNSSLQQPDQRSLHSTTASFD. Positions 1546-1568 are enriched in polar residues; it reads ASSNSSLQQPDQRSLHSTTASFD. Serine 1551 bears the Phosphoserine mark. Residues 1612 to 1819 form the Rap-GAP domain; it reads LRNVDLQKCR…EERNRSLDSV (208 aa). The segment at 1903-1958 is disordered; that stretch reads ATGMSSASPRGPRKLGAPFKSVTKKHSLQHIAVGGGAGAGGDTPPESPTLPQRRFK. The residue at position 1945 (threonine 1945) is a Phosphothreonine. Serine 1949 bears the Phosphoserine mark.

The polypeptide is Probable Rho GTPase-activating protein CG5521 (Drosophila melanogaster (Fruit fly)).